Consider the following 118-residue polypeptide: Small ribosomal subunit protein uS17 (118 aa).

The protein belongs to the universal ribosomal protein uS17 family. In terms of assembly, part of the 30S ribosomal subunit.

Functionally, one of the primary rRNA binding proteins, it binds specifically to the 5'-end of 16S ribosomal RNA. This chain is Small ribosomal subunit protein uS17, found in Methanopyrus kandleri (strain AV19 / DSM 6324 / JCM 9639 / NBRC 100938).